The chain runs to 198 residues: Na(+)-translocating NADH-quinone reductase subunit E (198 aa).

The next 6 helical transmembrane spans lie at 11 to 31, 35 to 55, 77 to 97, 110 to 130, 140 to 160, and 176 to 196; these read SVFI…FLAV, VSTA…SVPV, FLNF…LEMI, GIFL…SFMV, VVYG…LAGI, and LGIT…FSGV.

It belongs to the NqrDE/RnfAE family. As to quaternary structure, composed of six subunits; NqrA, NqrB, NqrC, NqrD, NqrE and NqrF.

It localises to the cell inner membrane. The catalysed reaction is a ubiquinone + n Na(+)(in) + NADH + H(+) = a ubiquinol + n Na(+)(out) + NAD(+). Functionally, NQR complex catalyzes the reduction of ubiquinone-1 to ubiquinol by two successive reactions, coupled with the transport of Na(+) ions from the cytoplasm to the periplasm. NqrA to NqrE are probably involved in the second step, the conversion of ubisemiquinone to ubiquinol. The sequence is that of Na(+)-translocating NADH-quinone reductase subunit E from Histophilus somni (strain 129Pt) (Haemophilus somnus).